Consider the following 361-residue polypeptide: MAGNSIGQFFRVTTFGESHGIALGCIIDGVPPGIPITEADIQLDLDRRRPGTSRYTTQRRELDQVRILSGVFEGVTTGTSIGLMIENTDQRSQDYSAIKDVFRPGHADYTYEQKYGVRDYRGGGRSSARETAMRVAAGAIAKKYLAQKFGVQVRGYLAQMGDVSCDLLDWDLVEQNPFFCPDASKLEPLDALMRELKKAGDSIGAKITVVAENVPVGLGEPVFDRLDADLAHALMSINAVKGVEIGDGFAVVTKRGSENRDEITPQGFQSNHAGGILGGISSGQPVVAHIALKPTSSIMVPGQTINRQGEAVEMVTRGRHDPCVGIRAVPIAEAMMAIVLMDHLLRQRAQCGDVASDVPRW.

The NADP(+) site is built by arginine 48 and arginine 54. FMN-binding positions include 125–127 (RSS), 238–239 (NA), glycine 278, 293–297 (KPTSS), and arginine 319.

It belongs to the chorismate synthase family. In terms of assembly, homotetramer. FMNH2 serves as cofactor.

It carries out the reaction 5-O-(1-carboxyvinyl)-3-phosphoshikimate = chorismate + phosphate. The protein operates within metabolic intermediate biosynthesis; chorismate biosynthesis; chorismate from D-erythrose 4-phosphate and phosphoenolpyruvate: step 7/7. Catalyzes the anti-1,4-elimination of the C-3 phosphate and the C-6 proR hydrogen from 5-enolpyruvylshikimate-3-phosphate (EPSP) to yield chorismate, which is the branch point compound that serves as the starting substrate for the three terminal pathways of aromatic amino acid biosynthesis. This reaction introduces a second double bond into the aromatic ring system. The polypeptide is Chorismate synthase (Yersinia pseudotuberculosis serotype O:1b (strain IP 31758)).